A 361-amino-acid polypeptide reads, in one-letter code: Queuine tRNA-ribosyltransferase (361 aa).

Aspartate 92 acts as the Proton acceptor in catalysis. Residues aspartate 92–phenylalanine 96, aspartate 146, glutamine 189, and glycine 216 contribute to the substrate site. The segment at glycine 247–aspartate 253 is RNA binding. Aspartate 266 acts as the Nucleophile in catalysis. Positions threonine 271–arginine 275 are RNA binding; important for wobble base 34 recognition. Zn(2+) contacts are provided by cysteine 304, cysteine 306, cysteine 309, and histidine 335.

The protein belongs to the queuine tRNA-ribosyltransferase family. Homodimer. Within each dimer, one monomer is responsible for RNA recognition and catalysis, while the other monomer binds to the replacement base PreQ1. The cofactor is Zn(2+).

The catalysed reaction is 7-aminomethyl-7-carbaguanine + guanosine(34) in tRNA = 7-aminomethyl-7-carbaguanosine(34) in tRNA + guanine. Its pathway is tRNA modification; tRNA-queuosine biosynthesis. In terms of biological role, catalyzes the base-exchange of a guanine (G) residue with the queuine precursor 7-aminomethyl-7-deazaguanine (PreQ1) at position 34 (anticodon wobble position) in tRNAs with GU(N) anticodons (tRNA-Asp, -Asn, -His and -Tyr). Catalysis occurs through a double-displacement mechanism. The nucleophile active site attacks the C1' of nucleotide 34 to detach the guanine base from the RNA, forming a covalent enzyme-RNA intermediate. The proton acceptor active site deprotonates the incoming PreQ1, allowing a nucleophilic attack on the C1' of the ribose to form the product. After dissociation, two additional enzymatic reactions on the tRNA convert PreQ1 to queuine (Q), resulting in the hypermodified nucleoside queuosine (7-(((4,5-cis-dihydroxy-2-cyclopenten-1-yl)amino)methyl)-7-deazaguanosine). The polypeptide is Queuine tRNA-ribosyltransferase (Rickettsia africae (strain ESF-5)).